Here is a 106-residue protein sequence, read N- to C-terminus: Ig kappa-b4 chain C region (106 aa).

The Ig-like domain occupies Pro-6–Gln-99. Residues Cys-27 and Cys-87 are joined by a disulfide bond. Residues Gln-48–Asn-64 are compositionally biased toward polar residues. Residues Gln-48–Ser-67 form a disordered region.

This chain is Ig kappa-b4 chain C region (K-BAS), found in Oryctolagus cuniculus (Rabbit).